Consider the following 216-residue polypeptide: 1-Cys peroxiredoxin PER1 (216 aa).

Positions 4-159 (ITLGDTVPNL…VLRALDSLLM (156 aa)) constitute a Thioredoxin domain. C46 functions as the Cysteine sulfenic acid (-SOH) intermediate in the catalytic mechanism. The short motif at 191-214 (KKMFPQGFKTADLPSKKGYLRHTE) is the Bipartite nuclear localization signal element.

Belongs to the peroxiredoxin family. Prx6 subfamily. As to expression, predominantly expressed in seed. Expressed in endosperm, embryo and aleurone cells. Also detected in young seedlings, abscission zones, stem branching points.

The protein resides in the nucleus. Its subcellular location is the cytoplasm. It catalyses the reaction a hydroperoxide + [thioredoxin]-dithiol = an alcohol + [thioredoxin]-disulfide + H2O. Thiol-specific peroxidase that catalyzes the reduction of hydrogen peroxide and organic hydroperoxides to water and alcohols, respectively. Seems to contribute to the inhibition of germination during stress. This is 1-Cys peroxiredoxin PER1 (PER1) from Arabidopsis thaliana (Mouse-ear cress).